The following is a 450-amino-acid chain: Probable glycosidase CRR1 (450 aa).

The first 17 residues, 1-17, serve as a signal peptide directing secretion; the sequence is MSKRIIQLILLSAFARA. The region spanning 67-347 is the GH16 domain; the sequence is SPESCVPVPA…WENAPDIKAH (281 aa). Glu225 (nucleophile) is an active-site residue. Catalysis depends on Glu229, which acts as the Proton donor. Residues 428 to 450 are disordered; it reads AQRQQHHRRSLPHVEAPPITNTM.

Belongs to the glycosyl hydrolase 16 family. CRR1 subfamily.

The protein localises to the spore wall. Its function is as follows. Spore specific glycosidase involved in spore wall assembly during sporulation. May be involved in copper import. This chain is Probable glycosidase CRR1 (CRR1), found in Eremothecium gossypii (strain ATCC 10895 / CBS 109.51 / FGSC 9923 / NRRL Y-1056) (Yeast).